The following is a 176-amino-acid chain: Insulin-like growth factor 1 (176 aa).

Residues 45–73 are b; that stretch reads GPETLCGAELVDTLQFVCGERGFYFSKPT. Disulfide bonds link Cys50–Cys92, Cys62–Cys105, and Cys91–Cys96. The c stretch occupies residues 74–85; the sequence is GYGPSSRRSHNR. The tract at residues 86–106 is a; sequence GIVDECCFQSCELRRLEMYCA. The interval 107–114 is d; that stretch reads PVKSGKAA. A propeptide spans 115 to 176 (e peptide); that stretch reads RSVRAQRHTD…GNTGGRNYRM (62 aa). The tract at residues 115–176 is disordered; it reads RSVRAQRHTD…GNTGGRNYRM (62 aa). Basic and acidic residues predominate over residues 140-161; that stretch reads RGTERRTAQHPDKTKPKKEVHQ.

Belongs to the insulin family.

Its subcellular location is the secreted. The insulin-like growth factors, isolated from plasma, are structurally and functionally related to insulin but have a much higher growth-promoting activity. Acts as a ligand for IGF1R. Binds to the alpha subunit of IGF1R, leading to the activation of the intrinsic tyrosine kinase activity which autophosphorylates tyrosine residues in the beta subunit thus initiatiating a cascade of down-stream signaling events leading to activation of the PI3K-AKT/PKB and the Ras-MAPK pathways. Binds to integrins. Its binding to integrins and subsequent ternary complex formation with integrins and IGFR1 are essential for IGF1 signaling. This Oncorhynchus mykiss (Rainbow trout) protein is Insulin-like growth factor 1.